Here is a 253-residue protein sequence, read N- to C-terminus: Sulfate transporter CysZ (253 aa).

Transmembrane regions (helical) follow at residues 31-51, 75-95, 151-171, and 222-242; these read FVILPLLVNILLMGGAFWWLF, LLWPLAVISVLLVFGYFFSTI, IVLLILYFIPGIGQTVAPVLW, and IPLLNLFIMPVAVCGATAMWV.

Belongs to the CysZ family.

Its subcellular location is the cell inner membrane. Functionally, high affinity, high specificity proton-dependent sulfate transporter, which mediates sulfate uptake. Provides the sulfur source for the cysteine synthesis pathway. The sequence is that of Sulfate transporter CysZ from Escherichia coli O127:H6 (strain E2348/69 / EPEC).